The sequence spans 943 residues: Isoleucine--tRNA ligase (943 aa).

A 'HIGH' region motif is present at residues 58 to 68 (PYANGNIHIGH). An L-isoleucyl-5'-AMP-binding site is contributed by Glu567. Positions 608-612 (KMSKS) match the 'KMSKS' region motif. Lys611 contacts ATP. Positions 906, 909, 926, and 929 each coordinate Zn(2+).

The protein belongs to the class-I aminoacyl-tRNA synthetase family. IleS type 1 subfamily. Monomer. Zn(2+) is required as a cofactor.

It localises to the cytoplasm. The enzyme catalyses tRNA(Ile) + L-isoleucine + ATP = L-isoleucyl-tRNA(Ile) + AMP + diphosphate. Its function is as follows. Catalyzes the attachment of isoleucine to tRNA(Ile). As IleRS can inadvertently accommodate and process structurally similar amino acids such as valine, to avoid such errors it has two additional distinct tRNA(Ile)-dependent editing activities. One activity is designated as 'pretransfer' editing and involves the hydrolysis of activated Val-AMP. The other activity is designated 'posttransfer' editing and involves deacylation of mischarged Val-tRNA(Ile). This chain is Isoleucine--tRNA ligase, found in Azotobacter vinelandii (strain DJ / ATCC BAA-1303).